A 98-amino-acid chain; its full sequence is Small ribosomal subunit protein bS6 (98 aa).

The protein belongs to the bacterial ribosomal protein bS6 family.

Binds together with bS18 to 16S ribosomal RNA. The protein is Small ribosomal subunit protein bS6 of Staphylococcus haemolyticus (strain JCSC1435).